The chain runs to 272 residues: Aquaporin FA-CHIP (272 aa).

Residues 1 to 17 (MASEFKKKAFWRAVIAE) are Cytoplasmic-facing. A helical transmembrane segment spans residues 18 to 35 (FLAMILFVFISIGAALGF). Residues 36-52 (NFPIEEKANQTVGRSQD) lie on the Extracellular side of the membrane. Asn-44 carries N-linked (GlcNAc...) asparagine glycosylation. The chain crosses the membrane as a helical span at residues 53–71 (IVKVSLAFGISIATMAQSV). Residues 72 to 97 (GHVSGAHLNPAVTLGCLLSCQISILK) are Cytoplasmic-facing. The short motif at 80 to 82 (NPA) is the NPA 1 element. Residues 98–119 (AVMYIIAQCLGAVVATAILSGI) traverse the membrane as a helical segment. At 120–139 (TSGLENNSLGLNGLSPGVSA) the chain is on the extracellular side. An N-linked (GlcNAc...) asparagine glycan is attached at Asn-125. Residues 140–160 (GQGLGVEILVTFQLVLCVVAV) form a helical membrane-spanning segment. Residues 161–168 (TDRRRHDV) are Cytoplasmic-facing. Residues 169–188 (SGSVPLAIGLSVALGHLIAI) traverse the membrane as a helical segment. At 189 to 214 (DYTGCGMNPARSFGSAVLTKNFTYHW) the chain is on the extracellular side. The NPA 2 motif lies at 196-198 (NPA). N-linked (GlcNAc...) asparagine glycosylation occurs at Asn-209. The helical transmembrane segment at 215–236 (IFWVGPMIGGAAAAIIYDFILA) threads the bilayer. The Cytoplasmic segment spans residues 237–272 (PRTSDLTDRMKVWTNGQVEEYELDGDDNTRVEMKPK).

The protein belongs to the MIP/aquaporin (TC 1.A.8) family.

Its subcellular location is the membrane. Forms a water-specific channel. The chain is Aquaporin FA-CHIP (AQPA) from Pelophylax lessonae (Pool frog).